Here is a 508-residue protein sequence, read N- to C-terminus: Alpha-amylase (508 aa).

A signal peptide spans 1 to 19 (MLSLIIAACCVTVALAGTF). A disulfide bridge links cysteine 46 with cysteine 102. Ca(2+)-binding residues include asparagine 116, arginine 173, and aspartate 182. Cysteine 156 and cysteine 175 form a disulfide bridge. Chloride is bound at residue arginine 210. Catalysis depends on aspartate 212, which acts as the Nucleophile. Histidine 216 provides a ligand contact to Ca(2+). Glutamate 248 functions as the Proton donor in the catalytic mechanism. Residues asparagine 311 and arginine 349 each contribute to the chloride site. 2 disulfide bridges follow: cysteine 383-cysteine 389 and cysteine 455-cysteine 467.

This sequence belongs to the glycosyl hydrolase 13 family. In terms of assembly, monomer. Ca(2+) serves as cofactor. Requires chloride as cofactor.

It carries out the reaction Endohydrolysis of (1-&gt;4)-alpha-D-glucosidic linkages in polysaccharides containing three or more (1-&gt;4)-alpha-linked D-glucose units.. The sequence is that of Alpha-amylase from Pecten maximus (King scallop).